Here is a 107-residue protein sequence, read N- to C-terminus: Large ribosomal subunit protein uL24 (107 aa).

It belongs to the universal ribosomal protein uL24 family. As to quaternary structure, part of the 50S ribosomal subunit.

Its function is as follows. One of two assembly initiator proteins, it binds directly to the 5'-end of the 23S rRNA, where it nucleates assembly of the 50S subunit. Functionally, one of the proteins that surrounds the polypeptide exit tunnel on the outside of the subunit. This Thermotoga neapolitana (strain ATCC 49049 / DSM 4359 / NBRC 107923 / NS-E) protein is Large ribosomal subunit protein uL24.